The following is a 216-amino-acid chain: Probable nicotinate-nucleotide adenylyltransferase (216 aa).

Belongs to the NadD family.

The enzyme catalyses nicotinate beta-D-ribonucleotide + ATP + H(+) = deamido-NAD(+) + diphosphate. It participates in cofactor biosynthesis; NAD(+) biosynthesis; deamido-NAD(+) from nicotinate D-ribonucleotide: step 1/1. Its function is as follows. Catalyzes the reversible adenylation of nicotinate mononucleotide (NaMN) to nicotinic acid adenine dinucleotide (NaAD). This is Probable nicotinate-nucleotide adenylyltransferase from Klebsiella pneumoniae (strain 342).